The primary structure comprises 324 residues: Methionyl-tRNA formyltransferase (324 aa).

113 to 116 serves as a coordination point for (6S)-5,6,7,8-tetrahydrofolate; it reads SLLP.

It belongs to the Fmt family.

The enzyme catalyses L-methionyl-tRNA(fMet) + (6R)-10-formyltetrahydrofolate = N-formyl-L-methionyl-tRNA(fMet) + (6S)-5,6,7,8-tetrahydrofolate + H(+). Functionally, attaches a formyl group to the free amino group of methionyl-tRNA(fMet). The formyl group appears to play a dual role in the initiator identity of N-formylmethionyl-tRNA by promoting its recognition by IF2 and preventing the misappropriation of this tRNA by the elongation apparatus. The polypeptide is Methionyl-tRNA formyltransferase (Bacteroides fragilis (strain ATCC 25285 / DSM 2151 / CCUG 4856 / JCM 11019 / LMG 10263 / NCTC 9343 / Onslow / VPI 2553 / EN-2)).